We begin with the raw amino-acid sequence, 130 residues long: Small ribosomal subunit protein eS8 (130 aa).

The protein belongs to the eukaryotic ribosomal protein eS8 family. Part of the 30S ribosomal subunit.

This Ignicoccus hospitalis (strain KIN4/I / DSM 18386 / JCM 14125) protein is Small ribosomal subunit protein eS8.